Here is a 550-residue protein sequence, read N- to C-terminus: Hydroxylamine reductase (550 aa).

The [2Fe-2S] cluster site is built by C3, C6, C18, and C25. H249, E273, C317, C405, C433, C458, E492, and K494 together coordinate hybrid [4Fe-2O-2S] cluster. C405 bears the Cysteine persulfide mark.

This sequence belongs to the HCP family. It depends on [2Fe-2S] cluster as a cofactor. The cofactor is hybrid [4Fe-2O-2S] cluster.

The protein resides in the cytoplasm. The enzyme catalyses A + NH4(+) + H2O = hydroxylamine + AH2 + H(+). In terms of biological role, catalyzes the reduction of hydroxylamine to form NH(3) and H(2)O. This Escherichia coli O17:K52:H18 (strain UMN026 / ExPEC) protein is Hydroxylamine reductase.